Here is a 183-residue protein sequence, read N- to C-terminus: Apo-citrate lyase phosphoribosyl-dephospho-CoA transferase (183 aa).

Belongs to the CitX family.

The enzyme catalyses apo-[citrate lyase ACP] + 2'-(5''-triphospho-alpha-D-ribosyl)-3'-dephospho-CoA = holo-[citrate lyase ACP] + diphosphate. Transfers 2-(5''-triphosphoribosyl)-3'-dephosphocoenzyme-A on a serine residue to the apo-acyl carrier protein (gamma chain) of the citrate lyase to yield holo-acyl carrier protein. The chain is Apo-citrate lyase phosphoribosyl-dephospho-CoA transferase from Shigella flexneri serotype 5b (strain 8401).